The sequence spans 45 residues: DNA replication protein repEB (45 aa).

Its function is as follows. Involved in T4 DNA replication. Important for the priming of leading strand DNA synthesis at oriE. Binds to ssDNA. The protein is DNA replication protein repEB (repEB) of Enterobacteria phage T4 (Bacteriophage T4).